The following is a 445-amino-acid chain: Tubulin beta-4B chain (445 aa).

Residues 1–4 (MREI) carry the MREI motif motif. Gln-11 provides a ligand contact to GTP. Thr-55 carries the phosphothreonine modification. Lys-58 carries the N6-acetyllysine modification. GTP-binding residues include Glu-69, Ser-138, Gly-142, Thr-143, and Gly-144. Glu-69 provides a ligand contact to Mg(2+). At Ser-172 the chain carries Phosphoserine; by CDK1. Positions 204 and 226 each coordinate GTP. The segment at 426-445 (QDATAEEEGEFEEEAEEEVA) is disordered. Residues 429–445 (TAEEEGEFEEEAEEEVA) are compositionally biased toward acidic residues. A 5-glutamyl polyglutamate modification is found at Glu-438.

The protein belongs to the tubulin family. As to quaternary structure, dimer of alpha and beta chains. A typical microtubule is a hollow water-filled tube with an outer diameter of 25 nm and an inner diameter of 15 nM. Alpha-beta heterodimers associate head-to-tail to form protofilaments running lengthwise along the microtubule wall with the beta-tubulin subunit facing the microtubule plus end conferring a structural polarity. Microtubules usually have 13 protofilaments but different protofilament numbers can be found in some organisms and specialized cells. Component of sperm flagellar doublet microtubules. It depends on Mg(2+) as a cofactor. In terms of processing, some glutamate residues at the C-terminus are polyglycylated, resulting in polyglycine chains on the gamma-carboxyl group. Glycylation is mainly limited to tubulin incorporated into axonemes (cilia and flagella) whereas glutamylation is prevalent in neuronal cells, centrioles, axonemes, and the mitotic spindle. Both modifications can coexist on the same protein on adjacent residues, and lowering polyglycylation levels increases polyglutamylation, and reciprocally. Cilia and flagella glycylation is required for their stability and maintenance. Flagella glycylation controls sperm motility. Post-translationally, some glutamate residues at the C-terminus are polyglutamylated, resulting in polyglutamate chains on the gamma-carboxyl group. Polyglutamylation plays a key role in microtubule severing by spastin (SPAST). SPAST preferentially recognizes and acts on microtubules decorated with short polyglutamate tails: severing activity by SPAST increases as the number of glutamates per tubulin rises from one to eight, but decreases beyond this glutamylation threshold. Glutamylation is also involved in cilia motility. Phosphorylated on Ser-172 by CDK1 during the cell cycle, from metaphase to telophase, but not in interphase. This phosphorylation inhibits tubulin incorporation into microtubules.

The protein resides in the cytoplasm. It localises to the cytoskeleton. The protein localises to the flagellum axoneme. In terms of biological role, tubulin is the major constituent of microtubules, a cylinder consisting of laterally associated linear protofilaments composed of alpha- and beta-tubulin heterodimers. Microtubules grow by the addition of GTP-tubulin dimers to the microtubule end, where a stabilizing cap forms. Below the cap, tubulin dimers are in GDP-bound state, owing to GTPase activity of alpha-tubulin. This is Tubulin beta-4B chain (TUBB4B) from Bos taurus (Bovine).